Consider the following 95-residue polypeptide: Co-chaperonin GroES (95 aa).

Belongs to the GroES chaperonin family. In terms of assembly, heptamer of 7 subunits arranged in a ring. Interacts with the chaperonin GroEL.

It is found in the cytoplasm. In terms of biological role, together with the chaperonin GroEL, plays an essential role in assisting protein folding. The GroEL-GroES system forms a nano-cage that allows encapsulation of the non-native substrate proteins and provides a physical environment optimized to promote and accelerate protein folding. GroES binds to the apical surface of the GroEL ring, thereby capping the opening of the GroEL channel. This chain is Co-chaperonin GroES, found in Geobacter metallireducens (strain ATCC 53774 / DSM 7210 / GS-15).